The chain runs to 283 residues: NAD kinase (283 aa).

D66 functions as the Proton acceptor in the catalytic mechanism. NAD(+)-binding positions include 66 to 67 (DG), 134 to 135 (ND), R145, R163, D165, and 176 to 181 (TAYSMS).

This sequence belongs to the NAD kinase family. The cofactor is a divalent metal cation.

The protein localises to the cytoplasm. It catalyses the reaction NAD(+) + ATP = ADP + NADP(+) + H(+). Involved in the regulation of the intracellular balance of NAD and NADP, and is a key enzyme in the biosynthesis of NADP. Catalyzes specifically the phosphorylation on 2'-hydroxyl of the adenosine moiety of NAD to yield NADP. The polypeptide is NAD kinase (Chlorobaculum tepidum (strain ATCC 49652 / DSM 12025 / NBRC 103806 / TLS) (Chlorobium tepidum)).